Reading from the N-terminus, the 81-residue chain is Small ribosomal subunit protein bS16 (81 aa).

This sequence belongs to the bacterial ribosomal protein bS16 family.

This Clostridium perfringens (strain ATCC 13124 / DSM 756 / JCM 1290 / NCIMB 6125 / NCTC 8237 / Type A) protein is Small ribosomal subunit protein bS16.